The primary structure comprises 856 residues: DNA mismatch repair protein MutS (856 aa).

617–624 (GPNMGGKS) lines the ATP pocket.

Belongs to the DNA mismatch repair MutS family.

Its function is as follows. This protein is involved in the repair of mismatches in DNA. It is possible that it carries out the mismatch recognition step. This protein has a weak ATPase activity. The chain is DNA mismatch repair protein MutS from Psychromonas ingrahamii (strain DSM 17664 / CCUG 51855 / 37).